The following is a 214-amino-acid chain: Thiamine-phosphate synthase (214 aa).

4-amino-2-methyl-5-(diphosphooxymethyl)pyrimidine-binding positions include 37 to 41 (QLRDK) and Asn69. Asp70 and Asp89 together coordinate Mg(2+). Residue Ser108 participates in 4-amino-2-methyl-5-(diphosphooxymethyl)pyrimidine binding. Position 134-136 (134-136 (TDS)) interacts with 2-[(2R,5Z)-2-carboxy-4-methylthiazol-5(2H)-ylidene]ethyl phosphate. Lys137 contributes to the 4-amino-2-methyl-5-(diphosphooxymethyl)pyrimidine binding site. 2-[(2R,5Z)-2-carboxy-4-methylthiazol-5(2H)-ylidene]ethyl phosphate contacts are provided by residues Gly167 and 187–188 (IS).

Belongs to the thiamine-phosphate synthase family. Mg(2+) serves as cofactor.

The catalysed reaction is 2-[(2R,5Z)-2-carboxy-4-methylthiazol-5(2H)-ylidene]ethyl phosphate + 4-amino-2-methyl-5-(diphosphooxymethyl)pyrimidine + 2 H(+) = thiamine phosphate + CO2 + diphosphate. It catalyses the reaction 2-(2-carboxy-4-methylthiazol-5-yl)ethyl phosphate + 4-amino-2-methyl-5-(diphosphooxymethyl)pyrimidine + 2 H(+) = thiamine phosphate + CO2 + diphosphate. The enzyme catalyses 4-methyl-5-(2-phosphooxyethyl)-thiazole + 4-amino-2-methyl-5-(diphosphooxymethyl)pyrimidine + H(+) = thiamine phosphate + diphosphate. It functions in the pathway cofactor biosynthesis; thiamine diphosphate biosynthesis; thiamine phosphate from 4-amino-2-methyl-5-diphosphomethylpyrimidine and 4-methyl-5-(2-phosphoethyl)-thiazole: step 1/1. Condenses 4-methyl-5-(beta-hydroxyethyl)thiazole monophosphate (THZ-P) and 2-methyl-4-amino-5-hydroxymethyl pyrimidine pyrophosphate (HMP-PP) to form thiamine monophosphate (TMP). The chain is Thiamine-phosphate synthase from Natronomonas pharaonis (strain ATCC 35678 / DSM 2160 / CIP 103997 / JCM 8858 / NBRC 14720 / NCIMB 2260 / Gabara) (Halobacterium pharaonis).